The sequence spans 72 residues: Translation initiation factor IF-1 (72 aa).

In terms of domain architecture, S1-like spans 1-72 (MAKSDVIEME…SKGRIVYRAR (72 aa)).

This sequence belongs to the IF-1 family. As to quaternary structure, component of the 30S ribosomal translation pre-initiation complex which assembles on the 30S ribosome in the order IF-2 and IF-3, IF-1 and N-formylmethionyl-tRNA(fMet); mRNA recruitment can occur at any time during PIC assembly.

It localises to the cytoplasm. Functionally, one of the essential components for the initiation of protein synthesis. Stabilizes the binding of IF-2 and IF-3 on the 30S subunit to which N-formylmethionyl-tRNA(fMet) subsequently binds. Helps modulate mRNA selection, yielding the 30S pre-initiation complex (PIC). Upon addition of the 50S ribosomal subunit IF-1, IF-2 and IF-3 are released leaving the mature 70S translation initiation complex. This chain is Translation initiation factor IF-1, found in Marinobacter nauticus (strain ATCC 700491 / DSM 11845 / VT8) (Marinobacter aquaeolei).